An 893-amino-acid polypeptide reads, in one-letter code: Ubiquitin-like protease 2 (893 aa).

The interval 538 to 800 (PVVLLVKDIK…YNLILQQADK (263 aa)) is protease. Active-site residues include His-644, Asp-678, and Cys-743.

It belongs to the peptidase C48 family.

It is found in the nucleus. The protein resides in the cytoplasm. It localises to the cytosol. In terms of biological role, protease that catalyzes two essential functions in the smo-1 pathway: processing of full-length smo-1 to their mature forms and deconjugation of smo-1 from targeted proteins. May deconjugate smo-1 from the cadherin protein hmr-1 and plays a role in its recruitment to and the maintenance of adherens junctions. Required for epidermal morphogenesis during embryonic development. The sequence is that of Ubiquitin-like protease 2 from Caenorhabditis elegans.